A 349-amino-acid polypeptide reads, in one-letter code: Anthranilate phosphoribosyltransferase (349 aa).

Residues Gly-82, 85-86 (GD), 92-95 (NVSS), 110-118 (KHGNRAVSG), and Ser-122 each bind 5-phospho-alpha-D-ribose 1-diphosphate. Gly-82 provides a ligand contact to anthranilate. Position 94 (Ser-94) interacts with Mg(2+). Asn-113 contributes to the anthranilate binding site. Anthranilate is bound at residue Arg-168. Mg(2+) contacts are provided by Asp-227 and Glu-228.

It belongs to the anthranilate phosphoribosyltransferase family. Homodimer. The cofactor is Mg(2+).

The enzyme catalyses N-(5-phospho-beta-D-ribosyl)anthranilate + diphosphate = 5-phospho-alpha-D-ribose 1-diphosphate + anthranilate. It participates in amino-acid biosynthesis; L-tryptophan biosynthesis; L-tryptophan from chorismate: step 2/5. Catalyzes the transfer of the phosphoribosyl group of 5-phosphorylribose-1-pyrophosphate (PRPP) to anthranilate to yield N-(5'-phosphoribosyl)-anthranilate (PRA). In Pseudomonas paraeruginosa (strain DSM 24068 / PA7) (Pseudomonas aeruginosa (strain PA7)), this protein is Anthranilate phosphoribosyltransferase.